We begin with the raw amino-acid sequence, 777 residues long: uncharacterized protein (777 aa).

Disordered regions lie at residues 1-101 (MNNN…NLSN), 128-150 (SYNN…NDDN), 219-267 (HHIH…NNMN), 334-366 (SLPF…GIDD), 391-466 (ISNS…ATIS), 529-577 (KNLN…NNKG), 590-622 (LAQE…ISTI), and 713-751 (EKQG…KWKP). 2 stretches are compositionally biased toward low complexity: residues 128–147 (SYNN…NNIN) and 243–265 (NNNN…NHNN). Residues 334–343 (SLPFSSLSDN) are compositionally biased toward polar residues. Residues 344–366 (NGDDDDDGIDDGIDDGIDDGIDD) show a composition bias toward acidic residues. Positions 391-407 (ISNSFHQNQSPCNNSFK) are enriched in polar residues. 2 stretches are compositionally biased toward low complexity: residues 408–466 (NNNN…ATIS) and 532–574 (NNNN…NNKN). Positions 597 to 606 (EQNKTKKELE) are enriched in basic and acidic residues. Composition is skewed to acidic residues over residues 607-620 (EVKE…EEIS) and 718-730 (DDPE…DSDS). Low complexity predominate over residues 731-740 (DSNSNSDSSD).

This is an uncharacterized protein from Dictyostelium discoideum (Social amoeba).